Reading from the N-terminus, the 946-residue chain is Inositol-trisphosphate 3-kinase B (946 aa).

5 disordered regions span residues 19–128 (EMKS…EEAK), 156–288 (AQSS…TRSC), 308–472 (ARVT…GIPS), 486–561 (KDLK…RKAC), and 580–638 (GALE…HTLD). A phosphoserine mark is found at S43, S49, and S71. Over residues 83–105 (NSSSGSGSGSSGSSVSSPSWAGR) the composition is skewed to low complexity. Phosphoserine is present on residues S204 and S269. The segment covering 396–411 (TTVSVQSAESSDSLSW) has biased composition (polar residues). Low complexity predominate over residues 445-458 (GGSPTLGLLGGSPS). Residues 524 to 534 (TGVQSEGTWES) show a composition bias toward polar residues. Low complexity predominate over residues 599–612 (SSSSASSTGFSSSY). Residues S679, K690, 730–732 (DDL), and D743 contribute to the ATP site. 2 residues coordinate substrate: K745 and R766. Residues 768-776 (DMYQKMIEV) form a calmodulin-binding region. 793–800 (KPRYMQWR) contacts substrate. Residues K817 and D897 each coordinate ATP. K900 contacts substrate.

The protein belongs to the inositol phosphokinase (IPK) family. As to quaternary structure, interacts with DMTN.

The protein resides in the cytoplasm. It localises to the cytoskeleton. Its subcellular location is the endoplasmic reticulum. The catalysed reaction is 1D-myo-inositol 1,4,5-trisphosphate + ATP = 1D-myo-inositol 1,3,4,5-tetrakisphosphate + ADP + H(+). Its activity is regulated as follows. IP3K is activated by calcium and calmodulin. Form B is much more sensitive to calcium/calmodulin than form A. Functionally, catalyzes the phosphorylation of 1D-myo-inositol 1,4,5-trisphosphate (InsP3) into 1D-myo-inositol 1,3,4,5-tetrakisphosphate and participates to the regulation of calcium homeostasis. This chain is Inositol-trisphosphate 3-kinase B, found in Homo sapiens (Human).